A 182-amino-acid polypeptide reads, in one-letter code: Putative minor fimbrial subunit PmfF (182 aa).

The N-terminal stretch at 1–22 (MKNSIIKSAITCLLLLSPSTFA) is a signal peptide.

Belongs to the fimbrial protein family.

Its subcellular location is the fimbrium. In Proteus mirabilis (strain HI4320), this protein is Putative minor fimbrial subunit PmfF (pmfF).